We begin with the raw amino-acid sequence, 397 residues long: DNA-directed RNA polymerase subunit Rpo1C (397 aa).

The protein belongs to the RNA polymerase beta' chain family. As to quaternary structure, part of the RNA polymerase complex.

It localises to the cytoplasm. The enzyme catalyses RNA(n) + a ribonucleoside 5'-triphosphate = RNA(n+1) + diphosphate. Its function is as follows. DNA-dependent RNA polymerase (RNAP) catalyzes the transcription of DNA into RNA using the four ribonucleoside triphosphates as substrates. Forms part of the jaw domain. The chain is DNA-directed RNA polymerase subunit Rpo1C from Pyrococcus abyssi (strain GE5 / Orsay).